The following is a 180-amino-acid chain: F17 fimbrial protein (180 aa).

The N-terminal stretch at 1-21 (MQKIQFILGILAAASSSATLA) is a signal peptide. Cys-37 and Cys-77 form a disulfide bridge.

Belongs to the fimbrial protein family.

Its subcellular location is the fimbrium. In terms of biological role, fimbriae (also called pili), polar filaments radiating from the surface of the bacterium to a length of 0.5-1.5 micrometers and numbering 100-300 per cell, enable bacteria to colonize the epithelium of specific host organs. The protein is F17 fimbrial protein (F17a-A) of Escherichia coli.